Consider the following 218-residue polypeptide: Ras-related protein RABA1h (218 aa).

20–27 (GDSGVGKS) is a GTP binding site. The Effector region signature appears at 42-50 (SRSTIGVEF). GTP is bound by residues 68 to 72 (DTAGQ), 126 to 129 (NKAD), and 156 to 157 (SA). S-geranylgeranyl cysteine attachment occurs at residues Cys215 and Cys216.

Belongs to the small GTPase superfamily. Rab family.

It localises to the cell membrane. Functionally, intracellular vesicle trafficking and protein transport. This Arabidopsis thaliana (Mouse-ear cress) protein is Ras-related protein RABA1h (RABA1H).